The primary structure comprises 424 residues: N-succinylarginine dihydrolase (424 aa).

Residues 19 to 28, Asn-110, and 137 to 138 contribute to the substrate site; these read AGLSPGNIAS and HR. The active site involves Glu-174. Arg-207 is a substrate binding site. Residue His-240 is part of the active site. The substrate site is built by Asp-242 and Asn-349. Catalysis depends on Cys-355, which acts as the Nucleophile.

Belongs to the succinylarginine dihydrolase family. In terms of assembly, homodimer.

It carries out the reaction N(2)-succinyl-L-arginine + 2 H2O + 2 H(+) = N(2)-succinyl-L-ornithine + 2 NH4(+) + CO2. Its pathway is amino-acid degradation; L-arginine degradation via AST pathway; L-glutamate and succinate from L-arginine: step 2/5. Functionally, catalyzes the hydrolysis of N(2)-succinylarginine into N(2)-succinylornithine, ammonia and CO(2). In Rhizorhabdus wittichii (strain DSM 6014 / CCUG 31198 / JCM 15750 / NBRC 105917 / EY 4224 / RW1) (Sphingomonas wittichii), this protein is N-succinylarginine dihydrolase.